Here is a 135-residue protein sequence, read N- to C-terminus: Ribonuclease P protein component (135 aa).

Belongs to the RnpA family. Consists of a catalytic RNA component (M1 or rnpB) and a protein subunit.

The catalysed reaction is Endonucleolytic cleavage of RNA, removing 5'-extranucleotides from tRNA precursor.. Functionally, RNaseP catalyzes the removal of the 5'-leader sequence from pre-tRNA to produce the mature 5'-terminus. It can also cleave other RNA substrates such as 4.5S RNA. The protein component plays an auxiliary but essential role in vivo by binding to the 5'-leader sequence and broadening the substrate specificity of the ribozyme. The protein is Ribonuclease P protein component of Pseudomonas paraeruginosa (strain DSM 24068 / PA7) (Pseudomonas aeruginosa (strain PA7)).